A 311-amino-acid chain; its full sequence is T-cell immunomodulatory protein (311 aa).

3 N-linked (GlcNAc...) asparagine glycosylation sites follow: Asn52, Asn70, and Asn181. A helical transmembrane segment spans residues Val266–Ile286.

The protein belongs to the TIP family. In terms of assembly, interacts with RUVBL1, RUVBL2 and alpha-tubulin.

Its subcellular location is the secreted. It localises to the cell membrane. Modulator of T-cell function. Has a protective effect in graft versus host disease model. The protein is T-cell immunomodulatory protein of Macaca fascicularis (Crab-eating macaque).